Consider the following 868-residue polypeptide: Translation initiation factor IF-2 (868 aa).

Basic and acidic residues predominate over residues 199-209 (SKKEEVKPEKV). The tract at residues 199-269 (SKKEEVKPEK…GTEKSDKYRE (71 aa)) is disordered. Basic residues predominate over residues 249-260 (RGGRSKFKKKKG). The region spanning 368–537 (GRAPVVTIMG…LLQSEVLELK (170 aa)) is the tr-type G domain. Positions 377–384 (GHVDHGKT) are G1. 377-384 (GHVDHGKT) serves as a coordination point for GTP. The tract at residues 402-406 (GITQH) is G2. A G3 region spans residues 423–426 (DTPG). GTP contacts are provided by residues 423–427 (DTPGH) and 477–480 (NKMD). The segment at 477 to 480 (NKMD) is G4. Residues 513–515 (SAK) are G5.

Belongs to the TRAFAC class translation factor GTPase superfamily. Classic translation factor GTPase family. IF-2 subfamily.

Its subcellular location is the cytoplasm. One of the essential components for the initiation of protein synthesis. Protects formylmethionyl-tRNA from spontaneous hydrolysis and promotes its binding to the 30S ribosomal subunits. Also involved in the hydrolysis of GTP during the formation of the 70S ribosomal complex. The protein is Translation initiation factor IF-2 of Legionella pneumophila (strain Paris).